Reading from the N-terminus, the 118-residue chain is MPREDAHFIYGYPKKGHGHSYTTAEEAAGIGILTVILGVLLLIGCWYCRRRNGYRALMDKSLHVGTQCALTRRCPQEGFDHRDSKVSLQEKNCEPVVPNAPPAYEKLSAEQSPPPYSP.

A helical transmembrane segment spans residues 27–47; it reads AAGIGILTVILGVLLLIGCWY. Residues 48 to 118 are Cytoplasmic-facing; sequence CRRRNGYRAL…AEQSPPPYSP (71 aa). The interval 78–118 is disordered; that stretch reads GFDHRDSKVSLQEKNCEPVVPNAPPAYEKLSAEQSPPPYSP. S108 carries the phosphoserine modification.

As to quaternary structure, interacts with PMEL. Interacts with GPR143. Post-translationally, acylated. As to expression, expression is restricted to melanoma and melanocyte cell lines and retina.

It localises to the endoplasmic reticulum membrane. The protein localises to the golgi apparatus. Its subcellular location is the trans-Golgi network membrane. It is found in the melanosome. Functionally, involved in melanosome biogenesis by ensuring the stability of GPR143. Plays a vital role in the expression, stability, trafficking, and processing of melanocyte protein PMEL, which is critical to the formation of stage II melanosomes. In Homo sapiens (Human), this protein is Melanoma antigen recognized by T-cells 1 (MLANA).